The following is a 79-amino-acid chain: Conotoxin ArMKLT2-031 (79 aa).

The signal sequence occupies residues 1-22; the sequence is MKLTCVLIIAVLFLTACQLTTG. The propeptide occupies 23-46; sequence ETYSRGEQKDHALRSTDKNSKLTR. A Pyrrolidone carboxylic acid modification is found at Gln-47. Cystine bridges form between Cys-48/Cys-62, Cys-55/Cys-66, and Cys-61/Cys-73.

It belongs to the conotoxin O1 superfamily. As to expression, expressed by the venom duct.

The protein resides in the secreted. In Conus arenatus (Sand-dusted cone), this protein is Conotoxin ArMKLT2-031.